We begin with the raw amino-acid sequence, 284 residues long: 2-dehydro-3-deoxyphosphooctonate aldolase (284 aa).

Belongs to the KdsA family.

Its subcellular location is the cytoplasm. It carries out the reaction D-arabinose 5-phosphate + phosphoenolpyruvate + H2O = 3-deoxy-alpha-D-manno-2-octulosonate-8-phosphate + phosphate. Its pathway is carbohydrate biosynthesis; 3-deoxy-D-manno-octulosonate biosynthesis; 3-deoxy-D-manno-octulosonate from D-ribulose 5-phosphate: step 2/3. It participates in bacterial outer membrane biogenesis; lipopolysaccharide biosynthesis. The chain is 2-dehydro-3-deoxyphosphooctonate aldolase from Escherichia coli O6:H1 (strain CFT073 / ATCC 700928 / UPEC).